Consider the following 393-residue polypeptide: Acetylornithine aminotransferase (393 aa).

Pyridoxal 5'-phosphate contacts are provided by residues 100-101 (GA) and Phe133. Arg136 serves as a coordination point for N(2)-acetyl-L-ornithine. 218-221 (DEVQ) serves as a coordination point for pyridoxal 5'-phosphate. Lys247 carries the N6-(pyridoxal phosphate)lysine modification. N(2)-acetyl-L-ornithine is bound at residue Ser274. Pyridoxal 5'-phosphate is bound at residue Thr275.

Belongs to the class-III pyridoxal-phosphate-dependent aminotransferase family. ArgD subfamily. Homodimer. Requires pyridoxal 5'-phosphate as cofactor.

It is found in the cytoplasm. It carries out the reaction N(2)-acetyl-L-ornithine + 2-oxoglutarate = N-acetyl-L-glutamate 5-semialdehyde + L-glutamate. It participates in amino-acid biosynthesis; L-arginine biosynthesis; N(2)-acetyl-L-ornithine from L-glutamate: step 4/4. This chain is Acetylornithine aminotransferase, found in Caldanaerobacter subterraneus subsp. tengcongensis (strain DSM 15242 / JCM 11007 / NBRC 100824 / MB4) (Thermoanaerobacter tengcongensis).